Reading from the N-terminus, the 154-residue chain is 6,7-dimethyl-8-ribityllumazine synthase (154 aa).

Residues phenylalanine 23, 57–59, and 81–83 contribute to the 5-amino-6-(D-ribitylamino)uracil site; these read AFE and AVI. Residue 86–87 participates in (2S)-2-hydroxy-3-oxobutyl phosphate binding; it reads ST. Histidine 89 (proton donor) is an active-site residue. Residue phenylalanine 114 participates in 5-amino-6-(D-ribitylamino)uracil binding. Arginine 128 provides a ligand contact to (2S)-2-hydroxy-3-oxobutyl phosphate.

It belongs to the DMRL synthase family.

The enzyme catalyses (2S)-2-hydroxy-3-oxobutyl phosphate + 5-amino-6-(D-ribitylamino)uracil = 6,7-dimethyl-8-(1-D-ribityl)lumazine + phosphate + 2 H2O + H(+). It participates in cofactor biosynthesis; riboflavin biosynthesis; riboflavin from 2-hydroxy-3-oxobutyl phosphate and 5-amino-6-(D-ribitylamino)uracil: step 1/2. Catalyzes the formation of 6,7-dimethyl-8-ribityllumazine by condensation of 5-amino-6-(D-ribitylamino)uracil with 3,4-dihydroxy-2-butanone 4-phosphate. This is the penultimate step in the biosynthesis of riboflavin. This Campylobacter jejuni subsp. doylei (strain ATCC BAA-1458 / RM4099 / 269.97) protein is 6,7-dimethyl-8-ribityllumazine synthase.